Reading from the N-terminus, the 258-residue chain is 1-(5-phosphoribosyl)-5-[(5-phosphoribosylamino)methylideneamino] imidazole-4-carboxamide isomerase (258 aa).

Catalysis depends on Asp-9, which acts as the Proton acceptor. Catalysis depends on Asp-131, which acts as the Proton donor.

Belongs to the HisA/HisF family.

The protein resides in the cytoplasm. The catalysed reaction is 1-(5-phospho-beta-D-ribosyl)-5-[(5-phospho-beta-D-ribosylamino)methylideneamino]imidazole-4-carboxamide = 5-[(5-phospho-1-deoxy-D-ribulos-1-ylimino)methylamino]-1-(5-phospho-beta-D-ribosyl)imidazole-4-carboxamide. It participates in amino-acid biosynthesis; L-histidine biosynthesis; L-histidine from 5-phospho-alpha-D-ribose 1-diphosphate: step 4/9. This is 1-(5-phosphoribosyl)-5-[(5-phosphoribosylamino)methylideneamino] imidazole-4-carboxamide isomerase from Salinibacter ruber (strain DSM 13855 / M31).